The sequence spans 107 residues: uncharacterized protein (107 aa).

The helical transmembrane segment at 62–79 (LLVVIVYYFSHVGSFSLA) threads the bilayer.

It localises to the nucleus membrane. This is an uncharacterized protein from Schizosaccharomyces pombe (strain 972 / ATCC 24843) (Fission yeast).